Reading from the N-terminus, the 491-residue chain is Ketol-acid reductoisomerase (NADP(+)) (491 aa).

Residues 15-208 enclose the KARI N-terminal Rossmann domain; the sequence is AQLGKCRFMG…GGHRAGVLES (194 aa). Residues 45–48, arginine 68, arginine 76, serine 78, and 108–110 contribute to the NADP(+) site; these read CGAQ and DKQ. The active site involves histidine 132. Residue glycine 158 coordinates NADP(+). 2 KARI C-terminal knotted domains span residues 209-344 and 345-484; these read SFVA…TAPQ and YEGK…MTDM. Aspartate 217, glutamate 221, glutamate 389, and glutamate 393 together coordinate Mg(2+). Serine 414 is a binding site for substrate.

This sequence belongs to the ketol-acid reductoisomerase family. Mg(2+) serves as cofactor.

It carries out the reaction (2R)-2,3-dihydroxy-3-methylbutanoate + NADP(+) = (2S)-2-acetolactate + NADPH + H(+). The enzyme catalyses (2R,3R)-2,3-dihydroxy-3-methylpentanoate + NADP(+) = (S)-2-ethyl-2-hydroxy-3-oxobutanoate + NADPH + H(+). Its pathway is amino-acid biosynthesis; L-isoleucine biosynthesis; L-isoleucine from 2-oxobutanoate: step 2/4. It functions in the pathway amino-acid biosynthesis; L-valine biosynthesis; L-valine from pyruvate: step 2/4. Its function is as follows. Involved in the biosynthesis of branched-chain amino acids (BCAA). Catalyzes an alkyl-migration followed by a ketol-acid reduction of (S)-2-acetolactate (S2AL) to yield (R)-2,3-dihydroxy-isovalerate. In the isomerase reaction, S2AL is rearranged via a Mg-dependent methyl migration to produce 3-hydroxy-3-methyl-2-ketobutyrate (HMKB). In the reductase reaction, this 2-ketoacid undergoes a metal-dependent reduction by NADPH to yield (R)-2,3-dihydroxy-isovalerate. This Escherichia coli O7:K1 (strain IAI39 / ExPEC) protein is Ketol-acid reductoisomerase (NADP(+)).